The primary structure comprises 196 residues: CASP-like protein 2U1 (196 aa).

At 1–11 the chain is on the cytoplasmic side; that stretch reads MAPMECVRRRN. The chain crosses the membrane as a helical span at residues 12–32; sequence VGELVLRCAATLVCMLSLMLL. Over 33 to 58 the chain is Extracellular; sequence VRDQQIAVQEVGVTSVTTQLRYSSST. The helical transmembrane segment at 59–79 threads the bilayer; that stretch reads GLVYLVYANGLVALYCFVVVL. The Cytoplasmic segment spans residues 80–95; the sequence is TSSFNGGSVMRRNKSG. Residues 96-116 form a helical membrane-spanning segment; the sequence is AWALFVLDQVLACILLSAASA. Residues 117-148 lie on the Extracellular side of the membrane; it reads ASEIAFLVEKGAKKTIWDSKCIVYGHFCRMLE. The chain crosses the membrane as a helical span at residues 149–169; that stretch reads VSIATSFIAVIMLGSICVLSA. Residues 170–196 lie on the Cytoplasmic side of the membrane; the sequence is KQLFQQYTHYARIVNMVKLKSTPNSLL.

Belongs to the Casparian strip membrane proteins (CASP) family. In terms of assembly, homodimer and heterodimers.

The protein localises to the cell membrane. This chain is CASP-like protein 2U1, found in Pteridium aquilinum subsp. aquilinum (Bracken fern).